A 194-amino-acid chain; its full sequence is MLKFLKQVGDYAKEAVQAGRYIGQGLSVTFDHMRRRPVTVQYPYEKLIPGERFRGRIHYEFDKCIACEVCVRVCPINLPVVDWEFDKATKKKKLNHYSIDFGVCIFCGNCVEYCPTNCLSMTEEYELATYDRHELNYDSVALGRLPYKVTDDPMVTPLRELVYLPKGVLDPHDLPANAPRPGARPEDLVEKTEA.

2 consecutive 4Fe-4S ferredoxin-type domains span residues 55 to 84 and 95 to 124; these read GRIHYEFDKCIACEVCVRVCPINLPVVDWE and NHYSIDFGVCIFCGNCVEYCPTNCLSMTEE. Residues Cys64, Cys67, Cys70, Cys74, Cys104, Cys107, Cys110, and Cys114 each coordinate [4Fe-4S] cluster. Residues 173–194 are disordered; sequence DLPANAPRPGARPEDLVEKTEA. Residues 183 to 194 are compositionally biased toward basic and acidic residues; sequence ARPEDLVEKTEA.

This sequence belongs to the complex I 23 kDa subunit family. As to quaternary structure, NDH-1 is composed of at least 11 different subunits. [4Fe-4S] cluster serves as cofactor.

Its subcellular location is the cellular thylakoid membrane. The catalysed reaction is a plastoquinone + NADH + (n+1) H(+)(in) = a plastoquinol + NAD(+) + n H(+)(out). The enzyme catalyses a plastoquinone + NADPH + (n+1) H(+)(in) = a plastoquinol + NADP(+) + n H(+)(out). Its function is as follows. NDH-1 shuttles electrons from an unknown electron donor, via FMN and iron-sulfur (Fe-S) centers, to quinones in the respiratory and/or the photosynthetic chain. The immediate electron acceptor for the enzyme in this species is believed to be plastoquinone. Couples the redox reaction to proton translocation, and thus conserves the redox energy in a proton gradient. The sequence is that of NAD(P)H-quinone oxidoreductase subunit I from Nostoc sp. (strain PCC 7120 / SAG 25.82 / UTEX 2576).